A 392-amino-acid chain; its full sequence is G2/mitotic-specific cyclin-B2 (392 aa).

This sequence belongs to the cyclin family. Cyclin AB subfamily. In terms of assembly, interacts with the CDK1 protein kinase to form a serine/threonine kinase holoenzyme complex also known as maturation promoting factor (MPF). The cyclin subunit imparts substrate specificity to the complex.

Its function is as follows. Essential for the control of the cell cycle at the G2/M (mitosis) transition. The chain is G2/mitotic-specific cyclin-B2 (CCNB2) from Rana japonica (Japanese reddish frog).